A 349-amino-acid polypeptide reads, in one-letter code: N-formyl peptide receptor 3 (349 aa).

The Extracellular segment spans residues 1–27; that stretch reads METNFSIPLNETEEVLPEPAGHTVLWI. Residues N4 and N10 are each glycosylated (N-linked (GlcNAc...) asparagine). A helical membrane pass occupies residues 28–50; the sequence is FSLLVHGVTFIFGVLGNGLVIWV. Residues 51–61 are Cytoplasmic-facing; that stretch reads AGFRMTRTVNT. Residues 62–83 form a helical membrane-spanning segment; the sequence is ICYLNLALADFSFSAILPFHMV. The Extracellular segment spans residues 84-100; the sequence is SVAMREKWPFGTFLCKL. A disulfide bridge connects residues C98 and C176. The chain crosses the membrane as a helical span at residues 101–121; the sequence is VHVMIDINLFVSVYLITIIAL. Residues 122–140 are Cytoplasmic-facing; sequence DRCICVLHPAWAQNHRTMS. The helical transmembrane segment at 141 to 162 threads the bilayer; sequence LAKRVMTGLWILTIVLTLPNFI. Topologically, residues 163–205 are extracellular; that stretch reads FWTTISTTNGDTYCIFNYPFWGDTVVERMNVFITMAKVSLILH. A helical transmembrane segment spans residues 206–226; that stretch reads FIIGFSIPMSIITVCYGIIVA. Residues 227 to 242 are Cytoplasmic-facing; sequence KIHKKRMTKSSRPLHI. The helical transmembrane segment at 243–266 threads the bilayer; it reads FTAVVASFFICWFPYELTGILMAV. The Extracellular portion of the chain corresponds to 267–286; the sequence is WLKEILLNGKYKIILVLINP. Residues 287–306 traverse the membrane as a helical segment; the sequence is TSSLAFFNSCLNPSLYVFMG. The Cytoplasmic portion of the chain corresponds to 307–349; sequence HNFQERLIRSLPTSLERALTEVPDSAQTSNTHTTSASPPEETE. The disordered stretch occupies residues 327–349; it reads EVPDSAQTSNTHTTSASPPEETE. Over residues 331 to 343 the composition is skewed to polar residues; that stretch reads SAQTSNTHTTSAS.

It belongs to the G-protein coupled receptor 1 family.

The protein resides in the cell membrane. In terms of biological role, low affinity receptor for N-formyl-methionyl peptides, which are powerful neutrophils chemotactic factors. Binding of FMLP to the receptor causes activation of neutrophils. This response is mediated via a G-protein that activates a phosphatidylinositol-calcium second messenger system. This Macaca mulatta (Rhesus macaque) protein is N-formyl peptide receptor 3 (FPR3).